Reading from the N-terminus, the 181-residue chain is Large ribosomal subunit protein uL6 (181 aa).

This sequence belongs to the universal ribosomal protein uL6 family. In terms of assembly, part of the 50S ribosomal subunit.

Functionally, this protein binds to the 23S rRNA, and is important in its secondary structure. It is located near the subunit interface in the base of the L7/L12 stalk, and near the tRNA binding site of the peptidyltransferase center. This chain is Large ribosomal subunit protein uL6, found in Lawsonia intracellularis (strain PHE/MN1-00).